We begin with the raw amino-acid sequence, 100 residues long: uncharacterized protein (100 aa).

Positions 65-91 (DDRERHLSATGERRREQGFGTSRRKDP) are enriched in basic and acidic residues. The segment at 65 to 100 (DDRERHLSATGERRREQGFGTSRRKDPSLYNWSDVK) is disordered.

The protein belongs to the chlamydial CPn_0121/CT_031/TC_0300 family.

This is an uncharacterized protein from Chlamydia trachomatis serovar D (strain ATCC VR-885 / DSM 19411 / UW-3/Cx).